We begin with the raw amino-acid sequence, 98 residues long: NADH-ubiquinone oxidoreductase chain 4L (98 aa).

3 helical membrane-spanning segments follow: residues 1–21, 26–46, and 61–81; these read MTPT…GMLI, LMAS…MTAV, and IIML…LVSI.

Belongs to the complex I subunit 4L family. In terms of assembly, core subunit of respiratory chain NADH dehydrogenase (Complex I) which is composed of 45 different subunits.

It localises to the mitochondrion inner membrane. It catalyses the reaction a ubiquinone + NADH + 5 H(+)(in) = a ubiquinol + NAD(+) + 4 H(+)(out). Functionally, core subunit of the mitochondrial membrane respiratory chain NADH dehydrogenase (Complex I) which catalyzes electron transfer from NADH through the respiratory chain, using ubiquinone as an electron acceptor. Part of the enzyme membrane arm which is embedded in the lipid bilayer and involved in proton translocation. The sequence is that of NADH-ubiquinone oxidoreductase chain 4L (MT-ND4L) from Papio hamadryas (Hamadryas baboon).